The chain runs to 404 residues: G2/mitotic-specific cyclin-B1 (404 aa).

Belongs to the cyclin family. Cyclin AB subfamily. In terms of assembly, interacts with the CDK1 protein kinase to form a serine/threonine kinase holoenzyme complex also known as maturation promoting factor (MPF). The cyclin subunit imparts substrate specificity to the complex.

Functionally, essential for the control of the cell cycle at the G2/M (mitosis) transition. The sequence is that of G2/mitotic-specific cyclin-B1 (ccnb1) from Oryzias latipes (Japanese rice fish).